The following is a 407-amino-acid chain: Phosphopentomutase (407 aa).

Aspartate 10, aspartate 306, histidine 311, aspartate 347, histidine 348, and histidine 359 together coordinate Mn(2+).

This sequence belongs to the phosphopentomutase family. Requires Mn(2+) as cofactor.

It localises to the cytoplasm. The enzyme catalyses 2-deoxy-alpha-D-ribose 1-phosphate = 2-deoxy-D-ribose 5-phosphate. It carries out the reaction alpha-D-ribose 1-phosphate = D-ribose 5-phosphate. The protein operates within carbohydrate degradation; 2-deoxy-D-ribose 1-phosphate degradation; D-glyceraldehyde 3-phosphate and acetaldehyde from 2-deoxy-alpha-D-ribose 1-phosphate: step 1/2. Functionally, isomerase that catalyzes the conversion of deoxy-ribose 1-phosphate (dRib-1-P) and ribose 1-phosphate (Rib-1-P) to deoxy-ribose 5-phosphate (dRib-5-P) and ribose 5-phosphate (Rib-5-P), respectively. The protein is Phosphopentomutase of Yersinia pestis bv. Antiqua (strain Angola).